The sequence spans 483 residues: Trigger factor (483 aa).

One can recognise a PPIase FKBP-type domain in the interval 166–251 (TDTVNIDYVG…INDVFTKEKP (86 aa)). Positions 435 to 460 (GEEPKLSTTKKVVEPTEEKTRKDSKM) are enriched in basic and acidic residues. Residues 435-483 (GEEPKLSTTKKVVEPTEEKTRKDSKMSTKKPAAKPAAKPAAATKKPVKK) are disordered. Residues 467 to 483 (AKPAAKPAAATKKPVKK) show a composition bias toward low complexity.

Belongs to the FKBP-type PPIase family. Tig subfamily.

The protein localises to the cytoplasm. The catalysed reaction is [protein]-peptidylproline (omega=180) = [protein]-peptidylproline (omega=0). Involved in protein export. Acts as a chaperone by maintaining the newly synthesized protein in an open conformation. Functions as a peptidyl-prolyl cis-trans isomerase. The polypeptide is Trigger factor (Mycoplasma mobile (strain ATCC 43663 / 163K / NCTC 11711) (Mesomycoplasma mobile)).